A 419-amino-acid polypeptide reads, in one-letter code: Vacuolar aspartic protease (419 aa).

The signal sequence occupies residues 1 to 22 (MQLSLSALTTVALALTSSLVDA). The 312-residue stretch at 104 to 415 (YFTEIQIGTP…DLDKNAVGLA (312 aa)) folds into the Peptidase A1 domain. Residue Asp-122 is part of the active site. The cysteines at positions 135 and 140 are disulfide-linked. N-linked (GlcNAc...) asparagine glycosylation is present at Asn-157. Asp-307 is an active-site residue. Residues Cys-341 and Cys-374 are joined by a disulfide bond. Residue Asn-358 is glycosylated (N-linked (GlcNAc...) asparagine). Residues 417–419 (TKV) carry the Microbody targeting signal motif.

The protein belongs to the peptidase A1 family.

It is found in the vacuole. The protein is Vacuolar aspartic protease (APR1) of Candida albicans (Yeast).